Reading from the N-terminus, the 295-residue chain is Putative nudix hydrolase 7 (295 aa).

The Nudix hydrolase domain maps to 9 to 182; that stretch reads SWRSAASIIL…KYALPPPQVY (174 aa). A Nudix box motif is present at residues 52 to 73; the sequence is TDAKLGDEFRIAAVRELFEESG. Residues glutamate 67 and glutamate 71 each coordinate Mg(2+).

It belongs to the Nudix hydrolase family. Mg(2+) serves as cofactor. The cofactor is Mn(2+).

Functionally, probably mediates the hydrolysis of some nucleoside diphosphate derivatives. This Caenorhabditis elegans protein is Putative nudix hydrolase 7 (ndx-7).